The sequence spans 523 residues: Sensory neuron membrane protein 1 (523 aa).

Over Met1–Ala10 the chain is Cytoplasmic. A helical membrane pass occupies residues Val11 to Ile31. Residues Leu32 to Val458 are Extracellular-facing. 2 N-linked (GlcNAc...) asparagine glycosylation sites follow: Asn67 and Asn229. Intrachain disulfides connect Cys268–Cys333, Cys297–Cys352, and Cys335–Cys341. Asn440 carries N-linked (GlcNAc...) asparagine glycosylation. A helical transmembrane segment spans residues Ser459–Phe479. Residues His480–Met523 are Cytoplasmic-facing. The tract at residues Val499–Met523 is disordered.

This sequence belongs to the CD36 family. Localizes to both male and female antennae but not the leg, wing, gut, head, or thoracic ganglia. Detected throughout the sensory epithelium, associating with both sex-pheromone sensilla and plant-volatile sensilla. Differentially expressed both among different sensilla and different neurons within a given sensillum. Expression coincides with that of several other olfactory-specific proteins that are involved in odor detection.

The protein localises to the cell membrane. Its function is as follows. Plays an olfactory role that is not restricted to pheromone sensitivity. The polypeptide is Sensory neuron membrane protein 1 (Manduca sexta (Tobacco hawkmoth)).